The sequence spans 192 residues: MKNFLAQQGKITLILTALCVLIYLAQQLGFEDDIMYLMHYPAYEEQDSEVWRYISHTLVHLSNLHILFNLSWFFIFGGMIERTFGSVKLLMLYVVASAITGYVQNYVSGPAFFGLSGVVYAVLGYVFIRDKLNHHLFDLPEGFFTMLLVGIALGFISPLFGVEMGNAAHISGLIVGLIWGFIDSKLRKNSLE.

At 1–10 (MKNFLAQQGK) the chain is on the cytoplasmic side. A helical transmembrane segment spans residues 11–31 (ITLILTALCVLIYLAQQLGFE). Topologically, residues 32–57 (DDIMYLMHYPAYEEQDSEVWRYISHT) are periplasmic. A helical membrane pass occupies residues 58 to 78 (LVHLSNLHILFNLSWFFIFGG). The Cytoplasmic portion of the chain corresponds to 79–82 (MIER). The chain crosses the membrane as a helical span at residues 83–103 (TFGSVKLLMLYVVASAITGYV). The Periplasmic segment spans residues 104-107 (QNYV). A helical membrane pass occupies residues 108–128 (SGPAFFGLSGVVYAVLGYVFI). Ser116 functions as the Nucleophile in the catalytic mechanism. Residues 129-141 (RDKLNHHLFDLPE) lie on the Cytoplasmic side of the membrane. Residues 142 to 162 (GFFTMLLVGIALGFISPLFGV) traverse the membrane as a helical segment. Glu163 is a topological domain (periplasmic). Residues 164–184 (MGNAAHISGLIVGLIWGFIDS) form a helical membrane-spanning segment. His169 is a catalytic residue. The Cytoplasmic segment spans residues 185-192 (KLRKNSLE).

Belongs to the peptidase S54 family.

The protein resides in the cell inner membrane. The enzyme catalyses Cleaves type-1 transmembrane domains using a catalytic dyad composed of serine and histidine that are contributed by different transmembrane domains.. Functionally, rhomboid-type serine protease that catalyzes intramembrane proteolysis. In Haemophilus influenzae (strain ATCC 51907 / DSM 11121 / KW20 / Rd), this protein is Rhomboid protease GlpG (glpG).